Consider the following 441-residue polypeptide: Adenylyltransferase and sulfurtransferase MOCS3 (441 aa).

ATP is bound by residues Gly-83, Asp-104, 111-115, Lys-128, and 172-173; these read TNLHR and DN. Zn(2+) contacts are provided by Cys-213 and Cys-216. The Glycyl thioester intermediate; for adenylyltransferase activity role is filled by Cys-230. Zn(2+) is bound by residues Cys-288 and Cys-291. Residues 339–439 enclose the Rhodanese domain; it reads AGRDHLLVDV…WTKTIDPNFP (101 aa). Cys-395 acts as the Cysteine persulfide intermediate; for sulfurtransferase activity in catalysis.

In the N-terminal section; belongs to the HesA/MoeB/ThiF family. UBA4 subfamily. It depends on Zn(2+) as a cofactor.

The protein resides in the cytoplasm. The catalysed reaction is [molybdopterin-synthase sulfur-carrier protein]-C-terminal Gly-Gly + ATP + H(+) = [molybdopterin-synthase sulfur-carrier protein]-C-terminal Gly-Gly-AMP + diphosphate. The enzyme catalyses [molybdopterin-synthase sulfur-carrier protein]-C-terminal Gly-Gly-AMP + S-sulfanyl-L-cysteinyl-[cysteine desulfurase] + AH2 = [molybdopterin-synthase sulfur-carrier protein]-C-terminal-Gly-aminoethanethioate + L-cysteinyl-[cysteine desulfurase] + A + AMP + 2 H(+). Its pathway is tRNA modification; 5-methoxycarbonylmethyl-2-thiouridine-tRNA biosynthesis. It functions in the pathway cofactor biosynthesis; molybdopterin biosynthesis. Functionally, plays a central role in 2-thiolation of mcm(5)S(2)U at tRNA wobble positions of cytosolic tRNA(Lys), tRNA(Glu) and tRNA(Gln). Also essential during biosynthesis of the molybdenum cofactor. Acts by mediating the C-terminal thiocarboxylation of sulfur carriers URM1 and MOCS2A. Its N-terminus first activates URM1 and MOCS2A as acyl-adenylates (-COAMP), then the persulfide sulfur on the catalytic cysteine is transferred to URM1 and MOCS2A to form thiocarboxylation (-COSH) of their C-terminus. The reaction probably involves hydrogen sulfide that is generated from the persulfide intermediate and that acts as a nucleophile towards URM1 and MOCS2A. Subsequently, a transient disulfide bond is formed. Does not use thiosulfate as sulfur donor; NFS1 probably acting as a sulfur donor for thiocarboxylation reactions. This chain is Adenylyltransferase and sulfurtransferase MOCS3, found in Anopheles gambiae (African malaria mosquito).